A 612-amino-acid polypeptide reads, in one-letter code: Cyclin-dependent kinase G1 (612 aa).

Positions 26–54 (SRDVYVRQSGRDDERRQIKRPSDHDLRRN) are enriched in basic and acidic residues. Disordered regions lie at residues 26–60 (SRDVYVRQSGRDDERRQIKRPSDHDLRRNDGRHRS) and 239–278 (CYSSGSGSGHLSVEKLSADGNSGREYYSSDHDELEHEDQD). The region spanning 297–593 (FQKLNKINEG…VEDALNHGWF (297 aa)) is the Protein kinase domain. Residues 303–311 (INEGTYGIV) and lysine 326 contribute to the ATP site. Tyrosine 308 is subject to Phosphotyrosine. The Proton acceptor role is filled by aspartate 426. Serine 453 carries the post-translational modification Phosphoserine. Threonine 459 is modified (phosphothreonine).

Belongs to the protein kinase superfamily. Ser/Thr protein kinase family. In terms of assembly, forms a complex with CYCL1-1. Associated with the spliceosome. Interacts with RS2Z33. As to expression, expressed in leaves and inflorescences. Lower levels of expression in roots and stems.

It localises to the nucleus speckle. The enzyme catalyses L-seryl-[protein] + ATP = O-phospho-L-seryl-[protein] + ADP + H(+). It catalyses the reaction L-threonyl-[protein] + ATP = O-phospho-L-threonyl-[protein] + ADP + H(+). Functionally, cyclin-dependent kinase involved in pre-mRNA splicing. Required for the correct splicing of the sixth intron of CALS5 pre-mRNA. May stabilize the binding of U1 snRNP to this rare type of intron with a GC 5'SS. Involved in chromosome pairing and is required for the completion of synapsis in male meiocytes at high ambient temperatures. The polypeptide is Cyclin-dependent kinase G1 (CDKG1) (Arabidopsis thaliana (Mouse-ear cress)).